A 235-amino-acid polypeptide reads, in one-letter code: Small ribosomal subunit protein uS3 (235 aa).

Residues 39 to 107 (IREFIKEECK…ELHLNIVEVR (69 aa)) enclose the KH type-2 domain. The interval 213–235 (QARDRKAQELQDGPAPRGAGGRR) is disordered.

The protein belongs to the universal ribosomal protein uS3 family. In terms of assembly, part of the 30S ribosomal subunit. Forms a tight complex with proteins S10 and S14.

Binds the lower part of the 30S subunit head. Binds mRNA in the 70S ribosome, positioning it for translation. This is Small ribosomal subunit protein uS3 from Ruegeria pomeroyi (strain ATCC 700808 / DSM 15171 / DSS-3) (Silicibacter pomeroyi).